The following is a 51-amino-acid chain: Large ribosomal subunit protein eL39 (51 aa).

This sequence belongs to the eukaryotic ribosomal protein eL39 family.

The sequence is that of Large ribosomal subunit protein eL39 from Pyrobaculum islandicum (strain DSM 4184 / JCM 9189 / GEO3).